The sequence spans 420 residues: Serine hydroxymethyltransferase (420 aa).

(6S)-5,6,7,8-tetrahydrofolate-binding positions include Leu121 and 125-127 (GHL). Lys229 carries the post-translational modification N6-(pyridoxal phosphate)lysine.

Belongs to the SHMT family. Homodimer. Pyridoxal 5'-phosphate serves as cofactor.

Its subcellular location is the cytoplasm. The enzyme catalyses (6R)-5,10-methylene-5,6,7,8-tetrahydrofolate + glycine + H2O = (6S)-5,6,7,8-tetrahydrofolate + L-serine. It participates in one-carbon metabolism; tetrahydrofolate interconversion. The protein operates within amino-acid biosynthesis; glycine biosynthesis; glycine from L-serine: step 1/1. Functionally, catalyzes the reversible interconversion of serine and glycine with tetrahydrofolate (THF) serving as the one-carbon carrier. This reaction serves as the major source of one-carbon groups required for the biosynthesis of purines, thymidylate, methionine, and other important biomolecules. Also exhibits THF-independent aldolase activity toward beta-hydroxyamino acids, producing glycine and aldehydes, via a retro-aldol mechanism. The chain is Serine hydroxymethyltransferase from Glaesserella parasuis serovar 5 (strain SH0165) (Haemophilus parasuis).